The following is a 464-amino-acid chain: Transcription factor SOX-8 (464 aa).

Disordered regions lie at residues 1 to 55, 154 to 244, 292 to 315, and 354 to 374; these read MLDM…DTAE, RLRV…QELR, GHSA…ASYS, and QLSP…ADYG. Residues 40–51 show a composition bias toward gly residues; the sequence is EGLGRAGGGGRG. Residues 55–97 are dimerization (DIM); it reads EAADERFPACIRDAVSQVLKGYDWSLVPMPVRGGGGGTLKAKP. A DNA-binding region (HMG box) is located at residues 99-167; it reads VKRPMNAFMV…QHKKDHPDYK (69 aa). 2 stretches are compositionally biased toward basic and acidic residues: residues 154–168 and 206–215; these read RLRV…DYKY and EAHHHSDHHT. The tract at residues 221 to 299 is transactivation domain (TAM); sequence PPTPPTTPKT…LNGHSALPTE (79 aa). Positions 303 to 315 are enriched in low complexity; that stretch reads ATASGSYGGASYS. The transactivation domain (TAC) stretch occupies residues 347-464; it reads RPQIKTEQLS…QPVYTTLTRP (118 aa). Residues 354–366 are compositionally biased toward polar residues; the sequence is QLSPSHYNDQSHG. Residues 418–426 carry the 9aaTAD motif; the sequence is PSLYQYPYF. The tract at residues 444–464 is disordered; the sequence is PPAHSPSSNWDQPVYTTLTRP. Polar residues predominate over residues 448 to 464; the sequence is SPSSNWDQPVYTTLTRP.

In terms of tissue distribution, brain, gut, limb, and testes. Slightly in liver, ovaries, spinal cord, lung and heart.

It is found in the nucleus. Transcription factor that may play a role in central nervous system, limb and facial development. May be involved in male sex determination. Binds the consensus motif 5'-[AT][AT]CAA[AT]G-3'. The polypeptide is Transcription factor SOX-8 (Mus musculus (Mouse)).